A 306-amino-acid polypeptide reads, in one-letter code: Manganese transport system membrane protein MntB (306 aa).

The Periplasmic portion of the chain corresponds to 1–25 (MNQLVVAFPFWHWLVEPLQYEFLIR). A helical membrane pass occupies residues 26-46 (AIWVSAFVGLVCAVLSCYITL). Residues 47 to 48 (KG) lie on the Cytoplasmic side of the membrane. A helical membrane pass occupies residues 49–69 (WSLMGDAISHAVVPGVVLAYA). The Periplasmic portion of the chain corresponds to 70–71 (LN). Residues 72–92 (IPFAIGAFTFGFGATVAIGYV) traverse the membrane as a helical segment. The Cytoplasmic portion of the chain corresponds to 93 to 101 (KSKTRLKED). The helical transmembrane segment at 102–122 (AVIGIVFTGFFALGLVLVTKI) threads the bilayer. Residues 123-141 (PSNVDLFHILFGNVLGISQ) are Periplasmic-facing. Residues 142–162 (QDIIQTLIAGSITLIVILLRR) traverse the membrane as a helical segment. Residues 163 to 179 (KDLLLFCFDPNHAKAIG) lie on the Cytoplasmic side of the membrane. A helical transmembrane segment spans residues 180-200 (LRTQVMYYTLLSVLALTIVAA). The Periplasmic portion of the chain corresponds to 201 to 202 (LQ). Residues 203–223 (TAGIILVISMLVTPGSIGYLL) form a helical membrane-spanning segment. At 224–228 (SDRFD) the chain is on the cytoplasmic side. A helical membrane pass occupies residues 229–249 (HMLWYSVVSSVLSCVLGTYLS). Residues 250-255 (YHFDVS) are Periplasmic-facing. The chain crosses the membrane as a helical span at residues 256–276 (TGGMIVVILTTLFVIAMIGAP). Residues 277-306 (KYGILAQEWRKRSGPNPEDDENQTVVVDQV) lie on the Cytoplasmic side of the membrane.

It belongs to the ABC-3 integral membrane protein family.

It localises to the cell membrane. In terms of biological role, part of an ATP-driven transport system for manganese. This is Manganese transport system membrane protein MntB (mntB) from Synechocystis sp. (strain ATCC 27184 / PCC 6803 / Kazusa).